Consider the following 142-residue polypeptide: Neuritin (142 aa).

The signal sequence occupies residues 1–27 (MGLKLNGRYISLILAVQIAYLVQAVRA). Gly-116 carries GPI-anchor amidated glycine lipidation. Positions 117–142 (AAGPLLPALPVLLVSLSAALATWLSF) are cleaved as a propeptide — removed in mature form.

This sequence belongs to the neuritin family. Component of the outer core of AMPAR complex. AMPAR complex consists of an inner core made of 4 pore-forming GluA/GRIA proteins (GRIA1, GRIA2, GRIA3 and GRIA4) and 4 major auxiliary subunits arranged in a twofold symmetry. One of the two pairs of distinct binding sites is occupied either by CNIH2, CNIH3 or CACNG2, CACNG3. The other harbors CACNG2, CACNG3, CACNG4, CACNG8 or GSG1L. This inner core of AMPAR complex is complemented by outer core constituents binding directly to the GluA/GRIA proteins at sites distinct from the interaction sites of the inner core constituents. Outer core constituents include at least PRRT1, PRRT2, CKAMP44/SHISA9, FRRS1L and NRN1. The proteins of the inner and outer core serve as a platform for other, more peripherally associated AMPAR constituents. Alone or in combination, these auxiliary subunits control the gating and pharmacology of the AMPAR complex and profoundly impact their biogenesis and protein processing.

The protein resides in the cell membrane. It localises to the synapse. Functionally, promotes neurite outgrowth and especially branching of neuritic processes in primary hippocampal and cortical cells. This Bos taurus (Bovine) protein is Neuritin (NRN1).